Consider the following 125-residue polypeptide: Small ribosomal subunit protein eS8 (125 aa).

Positions 1–23 (MQFQGRSRRKYTGAKLKSARGKR) are enriched in basic residues. Residues 1-34 (MQFQGRSRRKYTGAKLKSARGKRKFELGREPAAT) are disordered.

The protein belongs to the eukaryotic ribosomal protein eS8 family. Part of the 30S ribosomal subunit.

This chain is Small ribosomal subunit protein eS8, found in Methanococcoides burtonii (strain DSM 6242 / NBRC 107633 / OCM 468 / ACE-M).